The following is a 100-amino-acid chain: Small ribosomal subunit protein eS24 (100 aa).

The protein belongs to the eukaryotic ribosomal protein eS24 family.

This is Small ribosomal subunit protein eS24 from Methanothermobacter thermautotrophicus (strain ATCC 29096 / DSM 1053 / JCM 10044 / NBRC 100330 / Delta H) (Methanobacterium thermoautotrophicum).